Consider the following 830-residue polypeptide: Interleukin-4 receptor subunit alpha (830 aa).

The signal sequence occupies residues 1-32 (MGWLCPGLTFSVSCLILVWAAGSGVTCVSPGG). Over 33–240 (VRVLEWPICL…NYYEEPLEQR (208 aa)) the chain is Extracellular. An intrachain disulfide couples C41 to C51. N-linked (GlcNAc...) asparagine glycosylation is found at N60 and N78. Residues C82 and C94 are joined by a disulfide bond. 3 N-linked (GlcNAc...) asparagine glycosylation sites follow: N120, N142, and N170. Residues 133-232 (APRNLMVHAN…WSPSVKWLNY (100 aa)) enclose the Fibronectin type-III domain. S172 is subject to Phosphoserine. N184 and N217 each carry an N-linked (GlcNAc...) asparagine glycan. Positions 220–224 (WSEWS) match the WSXWS motif motif. A helical membrane pass occupies residues 241-264 (LPLGVSISCVVILIICLSCYFGII). Over 265-830 (RIKKEWWDQI…SPGPACMDTS (566 aa)) the chain is Cytoplasmic. Residues 270 to 278 (WWDQIPNPA) carry the Box 1 motif motif. The segment covering 378 to 387 (ENEEEEEEED) has biased composition (acidic residues). Disordered regions lie at residues 378–403 (ENEEEEEEEDKGSFCPSPENSGGSFQ) and 450–488 (MPWAEFPRVGSPEASSQGKEQPLNPEPSPQATPTQSLAS). The interval 444 to 564 (ENASAPMPWA…ETWEQILRQS (121 aa)) is required for IRS1 activation and IL4-induced cell growth. Y504 bears the Phosphotyrosine mark. Disordered stretches follow at residues 508–610 (STFL…EAGY) and 623–696 (CPGT…DGQK). Acidic residues predominate over residues 518–534 (GELDSDPELAEALEEVE). Positions 538-551 (PAAPQPSEPPPTLQ) are enriched in pro residues. Residues 564-662 (SVLQRRAAPA…VPTPLFTFGL (99 aa)) form a required for IL4-induced gene expression region. Residues 570-582 (AAPAPASGPSSSG) are compositionally biased toward low complexity. Y583 and Y610 each carry phosphotyrosine. Residues 623–635 (CPGTSGLEPSSGE) are compositionally biased toward polar residues. The residue at position 638 (Y638) is a Phosphotyrosine. Composition is skewed to pro residues over residues 646-655 (PGCPETPVPT) and 665-676 (EPPPSPQNPPFP). Positions 716 to 721 (IVYSAL) match the ITIM motif motif. The segment at 811–830 (SQTPTAVAMLSPGPACMDTS) is disordered.

The protein belongs to the type I cytokine receptor family. Type 4 subfamily. As to quaternary structure, the functional IL4 receptor is formed by initial binding of IL4 to IL4R. Subsequent recruitment to the complex of the common gamma chain, in immune cells, creates a type I receptor and, in non-immune cells, of IL13RA1 forms a type II receptor. IL4R can also interact with the IL13/IL13RA1 complex to form a similar type II receptor. Interacts with PIK3C3. Interacts with the SH2-containing phosphatases, PTPN6/SHIP1, PTPN11/SHIP2 and INPP5D/SHIP. Interacts with JAK1 through a Box 1-containing region; inhibited by SOCS5. Interacts with SOCS5; inhibits IL4 signaling. Interacts with JAK3. Interacts with CLM1. Interacts with IL13RA2. On IL4 binding, phosphorylated on C-terminal tyrosine residues.

The protein resides in the membrane. Its function is as follows. Receptor for both interleukin 4 and interleukin 13. Couples to the JAK1/2/3-STAT6 pathway. The IL4 response is involved in promoting Th2 differentiation. The IL4/IL13 responses are involved in regulating IgE production and, chemokine and mucus production at sites of allergic inflammation. In certain cell types, can signal through activation of insulin receptor substrates, IRS1/IRS2. The protein is Interleukin-4 receptor subunit alpha (IL4R) of Sus scrofa (Pig).